The chain runs to 285 residues: NAD kinase (285 aa).

The Proton acceptor role is filled by Asp66. NAD(+) is bound by residues 66-67 (DG), 137-138 (ND), Arg148, Arg165, Asp167, and 178-183 (TAYSMS).

The protein belongs to the NAD kinase family. The cofactor is a divalent metal cation.

It is found in the cytoplasm. The catalysed reaction is NAD(+) + ATP = ADP + NADP(+) + H(+). Involved in the regulation of the intracellular balance of NAD and NADP, and is a key enzyme in the biosynthesis of NADP. Catalyzes specifically the phosphorylation on 2'-hydroxyl of the adenosine moiety of NAD to yield NADP. The polypeptide is NAD kinase (Chlorobium luteolum (strain DSM 273 / BCRC 81028 / 2530) (Pelodictyon luteolum)).